The chain runs to 479 residues: Octopamine receptor (479 aa).

Residues 1–57 (MGQAATHDANNYTSINYTEIYDVIEDEKDVCAVADEPNIPCSFGISLAVPEWEAICT) lie on the Extracellular side of the membrane. N11 and N16 each carry an N-linked (GlcNAc...) asparagine glycan. Residues 58-80 (AIILTMIIISTVVGNILVILSVF) traverse the membrane as a helical segment. The Cytoplasmic portion of the chain corresponds to 81–90 (TYKPLRIVQN). The chain crosses the membrane as a helical span at residues 91–112 (FFIVSLAVADLTVAILVLPLNV). The Extracellular portion of the chain corresponds to 113-129 (AYSILGQWVFGIYVCKM). Residues 130–150 (WLTCDIMCCTSSILNLCAIAL) traverse the membrane as a helical segment. Topologically, residues 151 to 170 (DRYWAITDPINYAQKRTLER) are cytoplasmic. A helical membrane pass occupies residues 171-193 (VLFMIGIVWILSLVISSPPLLGW). Residues 194–218 (NDWPEVFEPDTPCRLTSQPGFVIFS) lie on the Extracellular side of the membrane. The helical transmembrane segment at 219 to 240 (SSGSFYIPLVIMTVVYFEIYLA) threads the bilayer. At 241–407 (TKKRLRDRAK…LTRERRAART (167 aa)) the chain is on the cytoplasmic side. Residues 260–319 (GRNKYETKESDPNDQDSVSSDANPNEHQGGTRLVAENEKKHRTRKLTPKKKPKRRYWSKD) form a disordered region. Positions 274-287 (QDSVSSDANPNEHQ) are enriched in polar residues. A compositionally biased stretch (basic residues) spans 299-315 (KHRTRKLTPKKKPKRRY). The chain crosses the membrane as a helical span at residues 408-429 (LGIIMGVFVVCWLPFFVIYLVI). Residues 430-441 (PFCVSCCLSNKF) are Extracellular-facing. Residues 442-462 (INFITWLGYVNSALNPLIYTI) form a helical membrane-spanning segment. Residues 463–479 (FNMDFRRAFKKLLFIKC) are Cytoplasmic-facing.

Belongs to the G-protein coupled receptor 1 family.

The protein localises to the cell membrane. Functionally, receptor for octopamine. Octopamine (OA) is a neurotransmitter, neurohormone, and neuromodulator in invertebrates. The activity of this receptor is mediated by G proteins which activate adenylyl cyclase. The chain is Octopamine receptor from Bombyx mori (Silk moth).